Here is a 232-residue protein sequence, read N- to C-terminus: Vesicle transport through interaction with t-SNAREs homolog 1B (232 aa).

Position 2 is an N-acetylalanine (alanine 2). Interaction with CLINT1 regions lie at residues alanine 2–glutamate 23 and alanine 69–phenylalanine 73. The Cytoplasmic segment spans residues alanine 2–leucine 208. A coiled-coil region spans residues alanine 36–threonine 98. A Phosphothreonine modification is found at threonine 103. The residue at position 107 (arginine 107) is an Omega-N-methylarginine. A Phosphoserine modification is found at serine 138. Positions glycine 160 to lysine 201 form a coiled coil. The helical; Anchor for type IV membrane protein transmembrane segment at leucine 209–phenylalanine 229 threads the bilayer. Residues arginine 230–histidine 232 lie on the Vesicular side of the membrane.

The protein belongs to the VTI1 family. Forms a SNARE complex with STX7, STX8 and VAMP8 which functions in the homotypic fusion of late endosomes. Component of the SNARE complex composed of STX7, STX8, VAMP7 and VIT1B that is required for heterotypic fusion of late endosomes with lysosomes. May interact with STX17. Interacts with CLINT1.

It localises to the early endosome membrane. The protein resides in the late endosome membrane. The protein localises to the lysosome membrane. Its subcellular location is the cytoplasmic granule. It is found in the recycling endosome membrane. In terms of biological role, V-SNARE that mediates vesicle transport pathways through interactions with t-SNAREs on the target membrane. These interactions are proposed to mediate aspects of the specificity of vesicle trafficking and to promote fusion of the lipid bilayers. This Rattus norvegicus (Rat) protein is Vesicle transport through interaction with t-SNAREs homolog 1B (Vti1b).